A 388-amino-acid polypeptide reads, in one-letter code: Carbamoyl phosphate synthase small chain (388 aa).

A CPSase region spans residues 1-198 (MSQDLLPGVT…WPEGYAKLDK (198 aa)). Residues Ser-53, Gly-250, and Gly-252 each contribute to the L-glutamine site. Residues 202–388 (EVVVIDYGVK…RFAGLMDAAK (187 aa)) form the Glutamine amidotransferase type-1 domain. Cys-279 acts as the Nucleophile in catalysis. Positions 280, 283, 321, 323, and 324 each coordinate L-glutamine. Catalysis depends on residues His-363 and Glu-365.

It belongs to the CarA family. As to quaternary structure, composed of two chains; the small (or glutamine) chain promotes the hydrolysis of glutamine to ammonia, which is used by the large (or ammonia) chain to synthesize carbamoyl phosphate. Tetramer of heterodimers (alpha,beta)4.

The catalysed reaction is hydrogencarbonate + L-glutamine + 2 ATP + H2O = carbamoyl phosphate + L-glutamate + 2 ADP + phosphate + 2 H(+). The enzyme catalyses L-glutamine + H2O = L-glutamate + NH4(+). It functions in the pathway amino-acid biosynthesis; L-arginine biosynthesis; carbamoyl phosphate from bicarbonate: step 1/1. The protein operates within pyrimidine metabolism; UMP biosynthesis via de novo pathway; (S)-dihydroorotate from bicarbonate: step 1/3. Small subunit of the glutamine-dependent carbamoyl phosphate synthetase (CPSase). CPSase catalyzes the formation of carbamoyl phosphate from the ammonia moiety of glutamine, carbonate, and phosphate donated by ATP, constituting the first step of 2 biosynthetic pathways, one leading to arginine and/or urea and the other to pyrimidine nucleotides. The small subunit (glutamine amidotransferase) binds and cleaves glutamine to supply the large subunit with the substrate ammonia. This Caulobacter vibrioides (strain ATCC 19089 / CIP 103742 / CB 15) (Caulobacter crescentus) protein is Carbamoyl phosphate synthase small chain.